The chain runs to 895 residues: Alanine--tRNA ligase (895 aa).

Zn(2+) is bound by residues His-577, His-581, Cys-680, and His-684.

The protein belongs to the class-II aminoacyl-tRNA synthetase family. Zn(2+) serves as cofactor.

Its subcellular location is the cytoplasm. The catalysed reaction is tRNA(Ala) + L-alanine + ATP = L-alanyl-tRNA(Ala) + AMP + diphosphate. Catalyzes the attachment of alanine to tRNA(Ala) in a two-step reaction: alanine is first activated by ATP to form Ala-AMP and then transferred to the acceptor end of tRNA(Ala). Also edits incorrectly charged Ser-tRNA(Ala) and Gly-tRNA(Ala) via its editing domain. The sequence is that of Alanine--tRNA ligase from Kocuria rhizophila (strain ATCC 9341 / DSM 348 / NBRC 103217 / DC2201).